Reading from the N-terminus, the 588-residue chain is Juvenile hormone esterase (588 aa).

Positions 1 to 23 are cleaved as a signal peptide; it reads MKFPKNLFLVLFYTSWKFCDVCA. Residues Asn79 and Asn83 are each glycosylated (N-linked (GlcNAc...) asparagine). Residues Cys91 and Cys109 are joined by a disulfide bond. The active-site Acyl-ester intermediate is the Ser214. Asn257 carries N-linked (GlcNAc...) asparagine glycosylation. Cys268 and Cys281 are disulfide-bonded. Glu350 serves as the catalytic Charge relay system. N-linked (GlcNAc...) asparagine glycans are attached at residues Asn389, Asn396, and Asn472. His479 functions as the Charge relay system in the catalytic mechanism.

The protein belongs to the type-B carboxylesterase/lipase family.

The protein localises to the secreted. The catalysed reaction is juvenile hormone III + H2O = juvenile hormone III carboxylate + methanol + H(+). Inhibited by 3-octylthio-1,1,1-trifluoro-2-propanone (OTFP), a specific inhibitor of juvenile hormone esterase (JHE), but not by diisopropyl fluorophosphate (DFP), a serine enzyme inhibitor. May function as a juvenile hormone (JH)-specific degradation enzyme in vivo decreasing JH activity. Hydrolyzes JH III in vitro. Hydrolyzes effectively also methyl hepthylthioacetothioate (HEPTAT), a synthetic substrate. Of the general esterase substrates, it has preference for 2-naphthyl acetate (2-NA) and shows a weak activity for 1-NA and 4-nitrophenylacetate (4-NPA). The polypeptide is Juvenile hormone esterase (Tribolium castaneum (Red flour beetle)).